The chain runs to 514 residues: H/ACA ribonucleoprotein complex subunit DKC1 (514 aa).

Position 2 is an N-acetylalanine (A2). Residues 2 to 21 (ADAEVIILPKKHKKKKERKS) are nucleolar localization. A Glycyl lysine isopeptide (Lys-Gly) (interchain with G-Cter in SUMO2) cross-link involves residue K20. A Phosphoserine modification is found at S21. Residues K39 and K43 each participate in a glycyl lysine isopeptide (Lys-Gly) (interchain with G-Cter in SUMO2) cross-link. Catalysis depends on D125, which acts as the Nucleophile. K191 is covalently cross-linked (Glycyl lysine isopeptide (Lys-Gly) (interchain with G-Cter in SUMO2)). The 76-residue stretch at 296–371 (HKRLVMKDSA…IVAKIKRVIM (76 aa)) folds into the PUA domain. S387 is subject to Phosphoserine. Residue K394 forms a Glycyl lysine isopeptide (Lys-Gly) (interchain with G-Cter in SUMO2) linkage. K413 is covalently cross-linked (Glycyl lysine isopeptide (Lys-Gly) (interchain with G-Cter in SUMO1); alternate). A Glycyl lysine isopeptide (Lys-Gly) (interchain with G-Cter in SUMO2); alternate cross-link involves residue K413. Residues K424 and K433 each participate in a glycyl lysine isopeptide (Lys-Gly) (interchain with G-Cter in SUMO2) cross-link. The tract at residues 443–514 (KTAKRKRESE…KAKEVELVSE (72 aa)) is disordered. The segment at 446-514 (KRKRESESES…KAKEVELVSE (69 aa)) is nuclear and nucleolar localization. 3 positions are modified to phosphoserine: S451, S453, and S455. T458 bears the Phosphothreonine mark. A Glycyl lysine isopeptide (Lys-Gly) (interchain with G-Cter in SUMO2) cross-link involves residue K467. Residues 468–480 (KEKKKSKKDKKAK) show a composition bias toward basic residues. A phosphoserine mark is found at S485, S494, and S513.

This sequence belongs to the pseudouridine synthase TruB family. In terms of assembly, part of the H/ACA small nucleolar ribonucleoprotein (H/ACA snoRNP) complex, which contains NHP2/NOLA2, GAR1/NOLA1, NOP10/NOLA3, and DKC1/NOLA4, which is presumed to be the catalytic subunit. The complex contains a stable core formed by binding of one or two NOP10-DKC1 heterodimers to NHP2; GAR1 subsequently binds to this core via DKC1. The complex binds a box H/ACA small nucleolar RNA (snoRNA), which may target the specific site of modification within the RNA substrate. During assembly, the complex contains NAF1 instead of GAR1/NOLA1. The complex also interacts with TERC, which contains a 3'-terminal domain related to the box H/ACA snoRNAs. Specific interactions with snoRNAs or TERC are mediated by GAR1 and NHP2. Associates with NOLC1/NOPP140. H/ACA snoRNPs interact with the SMN complex, consisting of SMN1 or SMN2, GEMIN2/SIP1, DDX20/GEMIN3, and GEMIN4. This is mediated by interaction between GAR1 and SMN1 or SMN2. The SMN complex may be required for correct assembly of the H/ACA snoRNP complex. Component of the telomerase holoenzyme complex composed of one molecule of TERT, one molecule of WRAP53/TCAB1, two molecules of H/ACA ribonucleoprotein complex subunits DKC1, NOP10, NHP2 and GAR1, and a telomerase RNA template component (TERC). The telomerase holoenzyme complex is associated with TEP1, SMG6/EST1A and POT1. Interacts with SHQ1; this interaction may lead to the stabilization of DKC1, from the time of its synthesis until its association with NOP10, NHP2, and NAF1 at the nascent H/ACA RNA. Interacts with HMBOX1. Interacts with DHX36. Ubiquitously expressed.

The protein localises to the nucleus. The protein resides in the nucleolus. It is found in the cajal body. It localises to the cytoplasm. The enzyme catalyses uridine in 5S rRNA = pseudouridine in 5S rRNA. Functionally, catalytic subunit of H/ACA small nucleolar ribonucleoprotein (H/ACA snoRNP) complex, which catalyzes pseudouridylation of rRNA. This involves the isomerization of uridine such that the ribose is subsequently attached to C5, instead of the normal N1. Each rRNA can contain up to 100 pseudouridine ('psi') residues, which may serve to stabilize the conformation of rRNAs. Required for ribosome biogenesis and telomere maintenance. Also required for correct processing or intranuclear trafficking of TERC, the RNA component of the telomerase reverse transcriptase (TERT) holoenzyme. Promotes cell to cell and cell to substratum adhesion, increases the cell proliferation rate and leads to cytokeratin hyper-expression. The sequence is that of H/ACA ribonucleoprotein complex subunit DKC1 from Homo sapiens (Human).